The chain runs to 400 residues: Acetate kinase (400 aa).

N10 provides a ligand contact to Mg(2+). K17 contacts ATP. R89 is a substrate binding site. The active-site Proton donor/acceptor is D148. Residues 208–212 (HLGNG), 283–285 (DCR), and 331–335 (GIGEN) contribute to the ATP site. A Mg(2+)-binding site is contributed by E385.

It belongs to the acetokinase family. As to quaternary structure, homodimer. The cofactor is Mg(2+). Mn(2+) is required as a cofactor.

It localises to the cytoplasm. It carries out the reaction acetate + ATP = acetyl phosphate + ADP. Its pathway is metabolic intermediate biosynthesis; acetyl-CoA biosynthesis; acetyl-CoA from acetate: step 1/2. Its function is as follows. Catalyzes the formation of acetyl phosphate from acetate and ATP. Can also catalyze the reverse reaction. This is Acetate kinase from Haemophilus ducreyi (strain 35000HP / ATCC 700724).